The sequence spans 37 residues: Large ribosomal subunit protein bL36 (37 aa).

Belongs to the bacterial ribosomal protein bL36 family.

In Rhodococcus erythropolis (strain PR4 / NBRC 100887), this protein is Large ribosomal subunit protein bL36.